A 378-amino-acid chain; its full sequence is Spermidine/putrescine import ATP-binding protein PotA (378 aa).

Residues 18–248 (VQLAGIRKCF…PKNLFVTGFI (231 aa)) enclose the ABC transporter domain. 50–57 (GPSGCGKT) is an ATP binding site.

Belongs to the ABC transporter superfamily. Spermidine/putrescine importer (TC 3.A.1.11.1) family. The complex is composed of two ATP-binding proteins (PotA), two transmembrane proteins (PotB and PotC) and a solute-binding protein (PotD).

The protein localises to the cell inner membrane. The enzyme catalyses ATP + H2O + polyamine-[polyamine-binding protein]Side 1 = ADP + phosphate + polyamineSide 2 + [polyamine-binding protein]Side 1.. In terms of biological role, part of the ABC transporter complex PotABCD involved in spermidine/putrescine import. Responsible for energy coupling to the transport system. The chain is Spermidine/putrescine import ATP-binding protein PotA from Shigella flexneri serotype 5b (strain 8401).